The chain runs to 207 residues: Uracil phosphoribosyltransferase (207 aa).

Residues Arg77, Arg102, and 129–137 contribute to the 5-phospho-alpha-D-ribose 1-diphosphate site; that span reads DPMLATGGS. Uracil-binding positions include Ile192 and 197-199; that span reads GDA. Residue Asp198 coordinates 5-phospho-alpha-D-ribose 1-diphosphate.

The protein belongs to the UPRTase family. The cofactor is Mg(2+).

The catalysed reaction is UMP + diphosphate = 5-phospho-alpha-D-ribose 1-diphosphate + uracil. It functions in the pathway pyrimidine metabolism; UMP biosynthesis via salvage pathway; UMP from uracil: step 1/1. With respect to regulation, allosterically activated by GTP. Functionally, catalyzes the conversion of uracil and 5-phospho-alpha-D-ribose 1-diphosphate (PRPP) to UMP and diphosphate. This is Uracil phosphoribosyltransferase from Mycoplasma mycoides subsp. mycoides SC (strain CCUG 32753 / NCTC 10114 / PG1).